The primary structure comprises 428 residues: Beta-1,3-galactosyl-O-glycosyl-glycoprotein beta-1,6-N-acetylglucosaminyltransferase (428 aa).

At 1–9 (MLRTLLRRR) the chain is on the cytoplasmic side. Residues 5-9 (LLRRR) are mediates interaction with GOLPH3 and is necessary and sufficient for localization to the Golgi. The chain crosses the membrane as a helical; Signal-anchor for type II membrane protein span at residues 10–32 (LFSYPTKYYFMVLVLSLITFSVL). A stem region region spans residues 33-121 (RIHQKPEFVS…EPLSKEEAEF (89 aa)). Over 33 to 428 (RIHQKPEFVS…RHKALETLKH (396 aa)) the chain is Lumenal. 2 N-linked (GlcNAc...) asparagine glycosylation sites follow: Asn-58 and Asn-95. Disulfide bonds link Cys-59–Cys-413, Cys-100–Cys-172, Cys-151–Cys-199, and Cys-372–Cys-381. A catalytic region spans residues 122 to 428 (PIAYSIVVHH…RHKALETLKH (307 aa)). UDP-N-acetyl-alpha-D-glucosamine-binding positions include 128 to 130 (VVH), 155 to 157 (DTK), and Tyr-187. A glycoprotein is bound by residues Glu-243, Lys-251, Arg-254, Glu-320, Lys-341, and Tyr-358. The Nucleophile role is filled by Glu-320. 2 residues coordinate UDP-N-acetyl-alpha-D-glucosamine: Arg-378 and Lys-401.

The protein belongs to the glycosyltransferase 14 family. In terms of assembly, interacts with GOLPH3; may control GCNT1 retention in the Golgi. Highly expressed in activated T-lymphocytes and myeloid cells.

It is found in the golgi apparatus membrane. The enzyme catalyses a 3-O-[beta-D-galactosyl-(1-&gt;3)-N-acetyl-alpha-D-galactosaminyl]-L-seryl-[protein] + UDP-N-acetyl-alpha-D-glucosamine = 3-O-{beta-D-galactosyl-(1-&gt;3)-[N-acetyl-beta-D-glucosaminyl-(1-&gt;6)]-N-acetyl-alpha-D-galactosaminyl}-L-seryl-[protein] + UDP + H(+). The catalysed reaction is a 3-O-[beta-D-galactosyl-(1-&gt;3)-N-acetyl-alpha-D-galactosaminyl]-L-threonyl-[protein] + UDP-N-acetyl-alpha-D-glucosamine = a 3-O-{beta-D-galactosyl-(1-&gt;3)-[N-acetyl-beta-D-glucosaminyl-(1-&gt;6)]-N-acetyl-alpha-D-galactosaminyl}-L-threonyl-[protein] + UDP + H(+). It catalyses the reaction a globoside GalGb4Cer + UDP-N-acetyl-alpha-D-glucosamine = a globoside GlcNAc-(beta1-&gt;6)-GalGb4Cer + UDP + H(+). It carries out the reaction a ganglioside GA1 + UDP-N-acetyl-alpha-D-glucosamine = a ganglioside beta-D-GlcNAc-(1-&gt;6)-GA1 + UDP + H(+). Its pathway is protein modification; protein glycosylation. It functions in the pathway glycolipid biosynthesis. Glycosyltransferase that catalyzes the transfer of an N-acetylglucosamine (GlcNAc) moiety in beta1-6 linkage from UDP-GlcNAc onto mucin-type core 1 O-glycan to form the branched mucin-type core 2 O-glycan. The catalysis is metal ion-independent and occurs with inversion of the anomeric configuration of sugar donor. Selectively involved in synthesis of mucin-type core 2 O-glycans that serve as scaffolds for the display of selectin ligand sialyl Lewis X epitope by myeloid cells, with an impact on homeostasis and recruitment to inflammatory sites. Can also act on glycolipid substrates. Transfers GlcNAc moiety to GalGb4Cer globosides in a reaction step to the synthesis of stage-specific embryonic antigen 1 (SSEA-1) determinant. Can use Galbeta1-3GalNAcalpha1- and Galbeta1-3GalNAcbeta1- oligosaccharide derivatives as acceptor substrates. The chain is Beta-1,3-galactosyl-O-glycosyl-glycoprotein beta-1,6-N-acetylglucosaminyltransferase (GCNT1) from Homo sapiens (Human).